The chain runs to 181 residues: Crustacyanin-C1 subunit (181 aa).

Intrachain disulfides connect cysteine 12–cysteine 121, cysteine 51–cysteine 173, and cysteine 117–cysteine 150.

The protein belongs to the calycin superfamily. Lipocalin family. In terms of assembly, oligomer; Can form dimers (beta-crustacyanin); or complexes of 16 subunits (alpha-crustacyanin). There are five types of subunits: A1, A2, A3, C1 and C2. In terms of tissue distribution, found in the carapace.

Its subcellular location is the secreted. It is found in the extracellular space. Binds the carotenoid astaxanthin (AXT) which provides the blue coloration to the carapace of the lobster. The chain is Crustacyanin-C1 subunit from Homarus gammarus (European lobster).